The following is a 423-amino-acid chain: Enolase (423 aa).

Glutamine 162 provides a ligand contact to (2R)-2-phosphoglycerate. The Proton donor role is filled by glutamate 204. Mg(2+)-binding residues include aspartate 241, glutamate 284, and aspartate 311. (2R)-2-phosphoglycerate is bound by residues lysine 336, arginine 365, serine 366, and lysine 387. Lysine 336 functions as the Proton acceptor in the catalytic mechanism.

It belongs to the enolase family. It depends on Mg(2+) as a cofactor.

The protein localises to the cytoplasm. The protein resides in the secreted. It is found in the cell surface. It carries out the reaction (2R)-2-phosphoglycerate = phosphoenolpyruvate + H2O. It functions in the pathway carbohydrate degradation; glycolysis; pyruvate from D-glyceraldehyde 3-phosphate: step 4/5. In terms of biological role, catalyzes the reversible conversion of 2-phosphoglycerate (2-PG) into phosphoenolpyruvate (PEP). It is essential for the degradation of carbohydrates via glycolysis. The protein is Enolase of Bartonella bacilliformis (strain ATCC 35685 / KC583 / Herrer 020/F12,63).